The chain runs to 362 residues: ATPase ARSA2 (362 aa).

27–34 (KGGVGKTT) contacts ATP. Residue aspartate 58 is part of the active site. The ATP site is built by glutamate 235 and asparagine 262.

The protein belongs to the arsA ATPase family. Homodimer. Interacts with SEC61B.

It localises to the cytoplasm. It is found in the cytosol. The protein localises to the endoplasmic reticulum. In terms of biological role, ATPase required for the post-translational delivery of tail-anchored (TA) proteins to the endoplasmic reticulum. Recognizes and selectively binds the transmembrane domain of TA proteins in the cytosol. This complex then targets to the endoplasmic reticulum by membrane-bound receptors, where the tail-anchored protein is released for insertion. This process is regulated by ATP binding and hydrolysis. ATP binding drives the homodimer towards the closed dimer state, facilitating recognition of newly synthesized TA membrane proteins. ATP hydrolysis is required for insertion. Subsequently, the homodimer reverts towards the open dimer state, lowering its affinity for the membrane-bound receptor, and returning it to the cytosol to initiate a new round of targeting. This is ATPase ARSA2 from Chlamydomonas reinhardtii (Chlamydomonas smithii).